Reading from the N-terminus, the 72-residue chain is UPF0150 protein jhp_0960 (72 aa).

Belongs to the UPF0150 family.

The chain is UPF0150 protein jhp_0960 from Helicobacter pylori (strain J99 / ATCC 700824) (Campylobacter pylori J99).